The following is a 215-amino-acid chain: uncharacterized protein (215 aa).

This is an uncharacterized protein from Ostreid herpesvirus 1 (isolate France) (OsHV-1).